A 1031-amino-acid polypeptide reads, in one-letter code: Protein translocase subunit SecA (1031 aa).

ATP is bound by residues Gln-143, 161–165, and Asp-662; that span reads GEGKT. 4 residues coordinate Zn(2+): Cys-1015, Cys-1017, Cys-1026, and Cys-1027.

The protein belongs to the SecA family. Monomer and homodimer. Part of the essential Sec protein translocation apparatus which comprises SecA, SecYEG and auxiliary proteins SecDF. Other proteins may also be involved. Zn(2+) serves as cofactor.

Its subcellular location is the cell inner membrane. The protein resides in the cytoplasm. The enzyme catalyses ATP + H2O + cellular proteinSide 1 = ADP + phosphate + cellular proteinSide 2.. Functionally, part of the Sec protein translocase complex. Interacts with the SecYEG preprotein conducting channel. Has a central role in coupling the hydrolysis of ATP to the transfer of proteins into and across the cell membrane, serving as an ATP-driven molecular motor driving the stepwise translocation of polypeptide chains across the membrane. The sequence is that of Protein translocase subunit SecA from Chlorobaculum tepidum (strain ATCC 49652 / DSM 12025 / NBRC 103806 / TLS) (Chlorobium tepidum).